Here is a 242-residue protein sequence, read N- to C-terminus: Stress response regulator protein 1 (242 aa).

One can recognise a Response regulatory domain in the interval 118 to 236; that stretch reads NFLLVDDNFI…FDHIITCIEK (119 aa). Residue Asp169 is modified to 4-aspartylphosphate.

Functionally, required for stress adaptation, morphogenesis and virulence. The sequence is that of Stress response regulator protein 1 (SRR1) from Debaryomyces hansenii (strain ATCC 36239 / CBS 767 / BCRC 21394 / JCM 1990 / NBRC 0083 / IGC 2968) (Yeast).